The sequence spans 295 residues: Protease HtpX (295 aa).

2 helical membrane-spanning segments follow: residues 4–24 and 42–62; these read IFLF…VLRL and ALLI…LAIS. Position 147 (His147) interacts with Zn(2+). Glu148 is a catalytic residue. Position 151 (His151) interacts with Zn(2+). Helical transmembrane passes span 155-175 and 197-217; these read GDMV…IFLA and FWIT…IIVM. Glu224 serves as a coordination point for Zn(2+).

The protein belongs to the peptidase M48B family. Zn(2+) is required as a cofactor.

It is found in the cell inner membrane. This chain is Protease HtpX, found in Thioalkalivibrio sulfidiphilus (strain HL-EbGR7).